Reading from the N-terminus, the 74-residue chain is U5-theraphotoxin-Cg1a (74 aa).

An N-terminal signal peptide occupies residues 1-19 (MNATIFALLLLLNLAMYNA). A propeptide spanning residues 20-39 (AEQSSETDMDDTLLIPENYR) is cleaved from the precursor. Cystine bridges form between C42-C56, C49-C61, and C55-C71.

The protein belongs to the neurotoxin 36 family. 01 subfamily. In terms of tissue distribution, expressed by the venom gland.

Its subcellular location is the secreted. Functionally, probable ion channel inhibitor. The polypeptide is U5-theraphotoxin-Cg1a (Chilobrachys guangxiensis (Chinese earth tiger tarantula)).